We begin with the raw amino-acid sequence, 31 residues long: Cyclotide mech-6 (31 aa).

Residues 1-31 constitute a cross-link (cyclopeptide (Gly-Asn)); it reads GVIPCGESCVFIPCISSVVGCTCKNKVCYRN. Disulfide bonds link Cys-5/Cys-21, Cys-9/Cys-23, and Cys-14/Cys-28.

This is a cyclic peptide. In terms of processing, contains 3 disulfide bonds.

Functionally, probably participates in a plant defense mechanism (Potential). Binds to and induces leakage in phospholipd membranes, particularly ones containing 1-palmitoyl-2-oleophosphatidylethanolamine (POPE). This is Cyclotide mech-6 from Melicytus chathamicus (Chatham Island mahoe).